A 194-amino-acid polypeptide reads, in one-letter code: dCTP deaminase (194 aa).

Residues 110–115 (RSSLAR), Asp128, 136–138 (VLE), Tyr171, Lys178, and Gln182 contribute to the dCTP site. The Proton donor/acceptor role is filled by Glu138. Residues 169–194 (RPYNKRDNAKYKDQTSAVGSRISGEN) form a disordered region. Basic and acidic residues predominate over residues 170–181 (PYNKRDNAKYKD). Polar residues predominate over residues 182–194 (QTSAVGSRISGEN).

Belongs to the dCTP deaminase family. As to quaternary structure, homotrimer.

The catalysed reaction is dCTP + H2O + H(+) = dUTP + NH4(+). It participates in pyrimidine metabolism; dUMP biosynthesis; dUMP from dCTP (dUTP route): step 1/2. Functionally, catalyzes the deamination of dCTP to dUTP. This chain is dCTP deaminase, found in Marinomonas sp. (strain MWYL1).